A 377-amino-acid chain; its full sequence is Spermidine/putrescine import ATP-binding protein PotA (377 aa).

Residues 18–248 (IRLSGISKSF…PKNLFVARFI (231 aa)) enclose the ABC transporter domain. ATP is bound at residue 50-57 (GPSGCGKT).

This sequence belongs to the ABC transporter superfamily. Spermidine/putrescine importer (TC 3.A.1.11.1) family. In terms of assembly, the complex is composed of two ATP-binding proteins (PotA), two transmembrane proteins (PotB and PotC) and a solute-binding protein (PotD).

The protein resides in the cell inner membrane. It catalyses the reaction ATP + H2O + polyamine-[polyamine-binding protein]Side 1 = ADP + phosphate + polyamineSide 2 + [polyamine-binding protein]Side 1.. In terms of biological role, part of the ABC transporter complex PotABCD involved in spermidine/putrescine import. Responsible for energy coupling to the transport system. The protein is Spermidine/putrescine import ATP-binding protein PotA of Vibrio cholerae serotype O1 (strain ATCC 39315 / El Tor Inaba N16961).